The primary structure comprises 532 residues: Glucose-6-phosphate isomerase (532 aa).

Glu322 (proton donor) is an active-site residue. Active-site residues include His351 and Lys457.

It belongs to the GPI family.

It is found in the cytoplasm. It catalyses the reaction alpha-D-glucose 6-phosphate = beta-D-fructose 6-phosphate. Its pathway is carbohydrate biosynthesis; gluconeogenesis. It functions in the pathway carbohydrate degradation; glycolysis; D-glyceraldehyde 3-phosphate and glycerone phosphate from D-glucose: step 2/4. Its function is as follows. Catalyzes the reversible isomerization of glucose-6-phosphate to fructose-6-phosphate. In Synechococcus sp. (strain JA-3-3Ab) (Cyanobacteria bacterium Yellowstone A-Prime), this protein is Glucose-6-phosphate isomerase.